Here is a 1093-residue protein sequence, read N- to C-terminus: Semaphorin 5c (1093 aa).

The N-terminal stretch at 1–34 (MNMLILKLPKMFSQLWLLLILSLLTLEGPQPSTG) is a signal peptide. Residue Asn-48 is glycosylated (N-linked (GlcNAc...) asparagine). The region spanning 50–495 (SRYISYQDLM…TDLALTRIPA (446 aa)) is the Sema domain. 2 disulfides stabilise this stretch: Cys-118–Cys-128 and Cys-146–Cys-155. N-linked (GlcNAc...) asparagine glycans are attached at residues Asn-162, Asn-182, Asn-285, and Asn-295. 2 disulfides stabilise this stretch: Cys-271–Cys-376 and Cys-296–Cys-338. An N-linked (GlcNAc...) asparagine glycan is attached at Asn-341. The PSI domain maps to 497 to 546 (HCSRHVSQSSCLNSMDPYCGWNELVERCMPQPQDSSVLQHWHQAPQITCP). 3 TSP type-1 domains span residues 553 to 605 (DGGW…TNCT), 607 to 663 (HGGW…PPCP), and 671 to 726 (DGGW…QSCQ). An N-linked (GlcNAc...) asparagine glycan is attached at Asn-603. 6 disulfides stabilise this stretch: Cys-619–Cys-656, Cys-623–Cys-662, Cys-634–Cys-646, Cys-683–Cys-720, Cys-687–Cys-725, and Cys-698–Cys-710. N-linked (GlcNAc...) asparagine glycosylation occurs at Asn-745. TSP type-1 domains lie at 794-834 (DSAD…HACP), 850-901 (HGEW…VPCE), and 904-953 (LGWS…NECE). 3 disulfides stabilise this stretch: Cys-862–Cys-895, Cys-866–Cys-900, and Cys-877–Cys-885. Residues 960–980 (TATLPIVIFVGLLFTVACCLA) traverse the membrane as a helical segment. Asn-998 and Asn-1046 each carry an N-linked (GlcNAc...) asparagine glycan. Residues 1018–1056 (PTKDYYDQRPKRQSSFRMPAKTSNLGNGNGTLNRNNMHQ) are disordered. Low complexity predominate over residues 1041–1053 (NLGNGNGTLNRNN).

Belongs to the semaphorin family. In egg chambers, high levels of expression in the follicle cells, with little to no expression in the germ cells (at protein level). In stage 3 to 7 egg chambers, planar polarized at the basal epithelial surface (at protein level).

It is found in the apical cell membrane. It localises to the lateral cell membrane. Its subcellular location is the endosome. Functionally, regulates the motility of migrating epithelial cells by providing guidance cues within the migratory environment and may also play a role in development of the olfactory system. May act as a positive axonal guidance cue. Function in neurons is essential for adult survival and is important for climbing behavior. Promotes collective migration of follicular epithelial cells in egg chambers, likely by acting at the leading edge of the basal epithelium cells to provide guidance cues across the cell boundary to the trailing edge of the cell ahead. The transmembrane receptor PlexA on the trailing edge of the cell ahead, appears to transduce this signal to suppress the formation of protrusions. Involved in olfactory avoidance behavior. The chain is Semaphorin 5c from Drosophila melanogaster (Fruit fly).